The primary structure comprises 156 residues: Small ribosomal subunit protein uS7 (156 aa).

It belongs to the universal ribosomal protein uS7 family. As to quaternary structure, part of the 30S ribosomal subunit. Contacts proteins S9 and S11.

Functionally, one of the primary rRNA binding proteins, it binds directly to 16S rRNA where it nucleates assembly of the head domain of the 30S subunit. Is located at the subunit interface close to the decoding center, probably blocks exit of the E-site tRNA. The sequence is that of Small ribosomal subunit protein uS7 from Synechococcus sp. (strain CC9311).